Here is a 347-residue protein sequence, read N- to C-terminus: Large ribosomal subunit protein uL10 (347 aa).

A disordered region spans residues 312–347; it reads AAAPAEEEVKKEEEPEEEEEDHAEEDGMAGLGALFG. Residues 325-338 are compositionally biased toward acidic residues; the sequence is EPEEEEEDHAEEDG.

Belongs to the universal ribosomal protein uL10 family. In terms of assembly, part of the 50S ribosomal subunit. Forms part of the ribosomal stalk which helps the ribosome interact with GTP-bound translation factors. Forms a heptameric L10(L12)2(L12)2(L12)2 complex, where L10 forms an elongated spine to which the L12 dimers bind in a sequential fashion.

Its function is as follows. Forms part of the ribosomal stalk, playing a central role in the interaction of the ribosome with GTP-bound translation factors. This is Large ribosomal subunit protein uL10 from Methanosarcina acetivorans (strain ATCC 35395 / DSM 2834 / JCM 12185 / C2A).